The chain runs to 57 residues: Granulin-1 (57 aa).

2 disulfides stabilise this stretch: Cys-4–Cys-16 and Cys-10–Cys-26.

It belongs to the granulin family. Post-translationally, granulins are disulfide bridged. Ubiquitous.

The protein resides in the secreted. In terms of biological role, granulins have possible cytokine-like activity. They may play a role in inflammation, wound repair, and tissue remodeling. This Cyprinus carpio (Common carp) protein is Granulin-1.